We begin with the raw amino-acid sequence, 1452 residues long: Pleiotropic drug resistance protein 1 (1452 aa).

Residues 152–425 (LNYLHILPNR…FEYMGFICPE (274 aa)) form the ABC transporter 1 domain. 185–192 (GPPSSGKT) contacts ATP. An ABC transmembrane type-2 1 domain is found at 504 to 716 (LLKACTAREY…AQNAIAVNEF (213 aa)). 7 helical membrane passes run 521–541 (FVYIFKMIQLTLMASITMTLF), 554–574 (GAVFLGALFYALIMIMFNGFS), 609–629 (IPITLVEVAIWVCMTYYVIGF), 640–660 (LLLLICVNQMASGLFRLMGAL), 664–684 (IIVANTFGSFVLLTVLVMGGF), 694–714 (WWIWGYWISPMMYAQNAIAVN), and 753–773 (IGAGALIGYVFLFNFLFAVAL). The disordered stretch occupies residues 808 to 830 (LGKSSSEKGNDVRRSASSRSMSS). The span at 812–821 (SSEKGNDVRR) shows a compositional bias: basic and acidic residues. In terms of domain architecture, ABC transporter 2 spans 855–1107 (ITFDDIRYAV…HLIKYFEGID (253 aa)). 900 to 907 (GVSGAGKT) is a binding site for ATP. One can recognise an ABC transmembrane type-2 2 domain in the interval 1180–1394 (TQCMACFWKQ…TLYGLIASQF (215 aa)). A run of 7 helical transmembrane segments spans residues 1199–1219 (YTAVRIMFTFFIALMFGTIFW), 1239–1259 (YIAVLFLGVQNATTVQPVIAI), 1287–1307 (LPYLFLQTIIYGVIVYAMIGF), 1314–1334 (FFWYLFFMYFTLLYFTLYGMM), 1344–1364 (IAAIISSAFYAVWNLFCGFIV), 1375–1395 (WYYYICPISWTLYGLIASQFG), and 1421–1441 (FVGYVALILVGISVLFLFIFA).

This sequence belongs to the ABC transporter superfamily. ABCG family. PDR (TC 3.A.1.205) subfamily. Expressed in root hypodermal passage cells. Expressed in stem tissues, particularly the vasculature and nodes adjacent to leaf axils.

It is found in the cell membrane. Functionally, cellular strigolactone (SL) transporter required for the exudation of SL from the root to the soil. The presence of SL in the vicinity of the roots is required for development of symbiotic interactions with arbuscular mycorrhizal fungi (AMF). Transports SL in the above ground tissues and is required for the control of shoot branching. SL regulates plant shoot architecture by inhibiting the outgrowth of axillary buds. Involved in the regulation of shootward and outward directional strigolactone transport in roots. Due to its polar localization in root cells, mediates directional shootward strigolactone transport, as well as localized outward directional transport for exudation to the soil. This chain is Pleiotropic drug resistance protein 1, found in Petunia hybrida (Petunia).